Reading from the N-terminus, the 121-residue chain is NAD(P)H-quinone oxidoreductase subunit 3, chloroplastic (121 aa).

Helical transmembrane passes span 10 to 30 (FWAFLLIACLIPVLAISVSNL), 65 to 85 (MFALVFVIFDVETVFLYPWAM), and 90 to 110 (LGIIAFAEVLVFVIILIIGLI).

The protein belongs to the complex I subunit 3 family. NDH is composed of at least 16 different subunits, 5 of which are encoded in the nucleus.

The protein resides in the plastid. The protein localises to the chloroplast thylakoid membrane. It catalyses the reaction a plastoquinone + NADH + (n+1) H(+)(in) = a plastoquinol + NAD(+) + n H(+)(out). It carries out the reaction a plastoquinone + NADPH + (n+1) H(+)(in) = a plastoquinol + NADP(+) + n H(+)(out). NDH shuttles electrons from NAD(P)H:plastoquinone, via FMN and iron-sulfur (Fe-S) centers, to quinones in the photosynthetic chain and possibly in a chloroplast respiratory chain. The immediate electron acceptor for the enzyme in this species is believed to be plastoquinone. Couples the redox reaction to proton translocation, and thus conserves the redox energy in a proton gradient. The polypeptide is NAD(P)H-quinone oxidoreductase subunit 3, chloroplastic (Staurastrum punctulatum (Green alga)).